Consider the following 365-residue polypeptide: 3-isopropylmalate dehydrogenase (365 aa).

80 to 91 (GPKWGTGEVRPE) provides a ligand contact to NAD(+). The substrate site is built by R98, R108, R137, and D226. D226, D251, and D255 together coordinate Mg(2+). 290 to 301 (GSAPDLPKNKVN) is a binding site for NAD(+).

This sequence belongs to the isocitrate and isopropylmalate dehydrogenases family. Homodimer. Requires Mg(2+) as cofactor. The cofactor is Mn(2+).

It localises to the cytoplasm. It catalyses the reaction (2R,3S)-3-isopropylmalate + NAD(+) = 4-methyl-2-oxopentanoate + CO2 + NADH. It participates in amino-acid biosynthesis; L-leucine biosynthesis; L-leucine from 3-methyl-2-oxobutanoate: step 3/4. Functionally, catalyzes the oxidation of 3-carboxy-2-hydroxy-4-methylpentanoate (3-isopropylmalate) to 3-carboxy-4-methyl-2-oxopentanoate. The product decarboxylates to 4-methyl-2 oxopentanoate. The chain is 3-isopropylmalate dehydrogenase (LEU2) from Candida boidinii (Yeast).